We begin with the raw amino-acid sequence, 561 residues long: Potassium-transporting ATPase potassium-binding subunit (561 aa).

10 consecutive transmembrane segments (helical) span residues isoleucine 4–isoleucine 24, alanine 65–leucine 85, isoleucine 133–valine 153, leucine 177–valine 197, phenylalanine 253–phenylalanine 273, alanine 285–glutamate 305, glycine 380–glycine 400, methionine 417–valine 437, methionine 484–leucine 504, and phenylalanine 528–leucine 548.

It belongs to the KdpA family. The system is composed of three essential subunits: KdpA, KdpB and KdpC.

Its subcellular location is the cell membrane. In terms of biological role, part of the high-affinity ATP-driven potassium transport (or Kdp) system, which catalyzes the hydrolysis of ATP coupled with the electrogenic transport of potassium into the cytoplasm. This subunit binds the extracellular potassium ions and delivers the ions to the membrane domain of KdpB through an intramembrane tunnel. The sequence is that of Potassium-transporting ATPase potassium-binding subunit from Listeria monocytogenes serotype 4b (strain F2365).